We begin with the raw amino-acid sequence, 197 residues long: Holliday junction branch migration complex subunit RuvA (197 aa).

The domain I stretch occupies residues 1-64 (MIGRLRGIVA…EDSVSLYGFL (64 aa)). A domain II region spans residues 65–143 (REGERRLFRD…QFGAGGALPT (79 aa)). Positions 144 to 153 (GSGPAPADPL) are flexible linker. The tract at residues 153-197 (LSDATVALQQLGYKPAEAARMAREAFNEGDEVAIVIRKALQSALR) is domain III.

The protein belongs to the RuvA family. As to quaternary structure, homotetramer. Forms an RuvA(8)-RuvB(12)-Holliday junction (HJ) complex. HJ DNA is sandwiched between 2 RuvA tetramers; dsDNA enters through RuvA and exits via RuvB. An RuvB hexamer assembles on each DNA strand where it exits the tetramer. Each RuvB hexamer is contacted by two RuvA subunits (via domain III) on 2 adjacent RuvB subunits; this complex drives branch migration. In the full resolvosome a probable DNA-RuvA(4)-RuvB(12)-RuvC(2) complex forms which resolves the HJ.

The protein localises to the cytoplasm. The RuvA-RuvB-RuvC complex processes Holliday junction (HJ) DNA during genetic recombination and DNA repair, while the RuvA-RuvB complex plays an important role in the rescue of blocked DNA replication forks via replication fork reversal (RFR). RuvA specifically binds to HJ cruciform DNA, conferring on it an open structure. The RuvB hexamer acts as an ATP-dependent pump, pulling dsDNA into and through the RuvAB complex. HJ branch migration allows RuvC to scan DNA until it finds its consensus sequence, where it cleaves and resolves the cruciform DNA. The chain is Holliday junction branch migration complex subunit RuvA from Stenotrophomonas maltophilia (strain R551-3).